The sequence spans 274 residues: MTEFTTLLQQGNAWFFIPSAILLGALHGLEPGHSKTMMAAFIIAIKGTIKQAVMLGLAATISHTAVVWLIAFGGMVISKRFTAQSAEPWLQLISAVIIISTAFWMFWRTWRGERNWLENMHEHDHEHHHHDHEDHHDHGHHHHHEHGEYQDAHARAHANDIKRRFDGREVTNWQILLFGLTGGLIPCPAAITVLLICIQLKALTLGATLVVSFSLGLALTLVTVGVGAAISVQQVAKRWSGFNTLAKRAPYFSSLLIGLVGVYMGVHGFMGIMR.

The Periplasmic segment spans residues 1-12 (MTEFTTLLQQGN). The chain crosses the membrane as a helical span at residues 13 to 33 (AWFFIPSAILLGALHGLEPGH). The Cytoplasmic portion of the chain corresponds to 34–56 (SKTMMAAFIIAIKGTIKQAVMLG). The helical transmembrane segment at 57–77 (LAATISHTAVVWLIAFGGMVI) threads the bilayer. At 78-86 (SKRFTAQSA) the chain is on the periplasmic side. Residues 87-107 (EPWLQLISAVIIISTAFWMFW) form a helical membrane-spanning segment. Residues 108-174 (RTWRGERNWL…FDGREVTNWQ (67 aa)) are Cytoplasmic-facing. Positions 127-137 (HHHHDHEDHHD) are enriched in basic and acidic residues. Positions 127–153 (HHHHDHEDHHDHGHHHHHEHGEYQDAH) are disordered. The chain crosses the membrane as a helical span at residues 175 to 195 (ILLFGLTGGLIPCPAAITVLL). Over 196 to 209 (ICIQLKALTLGATL) the chain is Periplasmic. The helical transmembrane segment at 210-230 (VVSFSLGLALTLVTVGVGAAI) threads the bilayer. The Cytoplasmic portion of the chain corresponds to 231–251 (SVQQVAKRWSGFNTLAKRAPY). Residues 252–272 (FSSLLIGLVGVYMGVHGFMGI) traverse the membrane as a helical segment. Over 273–274 (MR) the chain is Periplasmic.

It belongs to the NiCoT transporter (TC 2.A.52) family. RcnA subfamily.

The protein resides in the cell inner membrane. In terms of biological role, efflux system for nickel and cobalt. This chain is Nickel/cobalt efflux system RcnA (rcnA), found in Escherichia coli O1:K1 / APEC.